The sequence spans 473 residues: MLQIYNTLSRSKQVFKPIVPGKVKMYVCGMTVYDFCHIGHARVMIVFDMVVRWLRASGYEVQYVRNITDIDDKIIKRALENSEPISALTNRFIAAMHADSDELGLMHPDQEPRATDYIQQMQGMIGKLIENELAYQGEDGDVNFAVRLLPRYGQLSGKTLDELNAGERVAIGGGKRDPLDFVLWKSAKPEEPADTRWNSPWGEGRPGWHIECSAMSCDLLGAHFDIHGGGADLQFPHHENEIAQSEGALYGQNRQENDAPFVNYWMHNGHIRVNEEKMSKSLGNFFLIRDVLKSFDPEVVRFFMLKAHYRSPINYSDAQLEEARSGLTRLYTALTHIPEVDTVPIDLQNPWAKRFADAMNDDFNTPEAIAVLFDLASEVNRAQGAEKQMLAGLLKSLGGTLNFLQRDPTNFLQAGSKDQSGLSSEQIEEHIAARVAAKQAKDFAKADGIRKALLEQGVVLEDKPGGITEWRRA.

A Zn(2+)-binding site is contributed by C28. Positions 30-40 (MTVYDFCHIGH) match the 'HIGH' region motif. Positions 212, 237, and 241 each coordinate Zn(2+). A 'KMSKS' region motif is present at residues 277–281 (KMSKS). K280 is an ATP binding site.

This sequence belongs to the class-I aminoacyl-tRNA synthetase family. Monomer. Requires Zn(2+) as cofactor.

Its subcellular location is the cytoplasm. It catalyses the reaction tRNA(Cys) + L-cysteine + ATP = L-cysteinyl-tRNA(Cys) + AMP + diphosphate. The polypeptide is Cysteine--tRNA ligase (Polynucleobacter asymbioticus (strain DSM 18221 / CIP 109841 / QLW-P1DMWA-1) (Polynucleobacter necessarius subsp. asymbioticus)).